A 373-amino-acid polypeptide reads, in one-letter code: Indole glucosinolate O-methyltransferase 2 (373 aa).

S-adenosyl-L-homocysteine-binding residues include glycine 217, aspartate 240, aspartate 260, methionine 261, and lysine 274. Histidine 278 functions as the Proton acceptor in the catalytic mechanism.

This sequence belongs to the class I-like SAM-binding methyltransferase superfamily. Cation-independent O-methyltransferase family.

Its pathway is secondary metabolite biosynthesis. Functionally, involved in indole glucosinolate biosynthesis. Catalyzes methoxylation reactions of the glucosinolate indole ring. Converts the hydroxy intermediates 4-hydroxy-indol-3-yl-methylglucosinolate (4OH-I3M) and 1-hydroxy-indol-3-yl-methylglucosinolate (1OH-I3M) to 4-methoxy-indol-3-yl-methylglucosinolate (4MO-I3M) and 1-methoxy-indol-3-yl-methylglucosinolate (1MO-I3M), respectively. The sequence is that of Indole glucosinolate O-methyltransferase 2 from Arabidopsis thaliana (Mouse-ear cress).